A 114-amino-acid polypeptide reads, in one-letter code: Iron-sulfur cluster insertion protein ErpA (114 aa).

Iron-sulfur cluster contacts are provided by cysteine 42, cysteine 106, and cysteine 108.

The protein belongs to the HesB/IscA family. In terms of assembly, homodimer. Iron-sulfur cluster is required as a cofactor.

Functionally, required for insertion of 4Fe-4S clusters for at least IspG. The polypeptide is Iron-sulfur cluster insertion protein ErpA (Haemophilus ducreyi (strain 35000HP / ATCC 700724)).